We begin with the raw amino-acid sequence, 35 residues long: Coatomer subunit alpha (35 aa).

As to quaternary structure, oligomeric complex that consists of at least the alpha, beta, beta', gamma, delta, epsilon and zeta subunits. Interacts with SCYL1. Interacts with JAGN1. Interacts with TMEM41B. Interacts with SVEP1. Probably interacts with PEX11A. Gastric, duodenal and jejunal mucosa. Circulates in the blood. Seems to be confined to specific endocrine cells.

In terms of biological role, xenin stimulates exocrine pancreatic secretion. It inhibits pentagastrin-stimulated secretion of acid, to induce exocrine pancreatic secretion and to affect small and large intestinal motility. In the gut, xenin interacts with the neurotensin receptor. The polypeptide is Coatomer subunit alpha (COPA) (Canis lupus familiaris (Dog)).